Here is a 697-residue protein sequence, read N- to C-terminus: Glycine--tRNA ligase beta subunit (697 aa).

Belongs to the class-II aminoacyl-tRNA synthetase family. As to quaternary structure, tetramer of two alpha and two beta subunits.

The protein resides in the cytoplasm. It catalyses the reaction tRNA(Gly) + glycine + ATP = glycyl-tRNA(Gly) + AMP + diphosphate. The chain is Glycine--tRNA ligase beta subunit from Cereibacter sphaeroides (strain ATCC 17023 / DSM 158 / JCM 6121 / CCUG 31486 / LMG 2827 / NBRC 12203 / NCIMB 8253 / ATH 2.4.1.) (Rhodobacter sphaeroides).